A 341-amino-acid chain; its full sequence is S-adenosylmethionine:tRNA ribosyltransferase-isomerase (341 aa).

The protein belongs to the QueA family. Monomer.

It localises to the cytoplasm. The enzyme catalyses 7-aminomethyl-7-carbaguanosine(34) in tRNA + S-adenosyl-L-methionine = epoxyqueuosine(34) in tRNA + adenine + L-methionine + 2 H(+). It functions in the pathway tRNA modification; tRNA-queuosine biosynthesis. Functionally, transfers and isomerizes the ribose moiety from AdoMet to the 7-aminomethyl group of 7-deazaguanine (preQ1-tRNA) to give epoxyqueuosine (oQ-tRNA). This Clostridium kluyveri (strain NBRC 12016) protein is S-adenosylmethionine:tRNA ribosyltransferase-isomerase.